The following is a 579-amino-acid chain: Cytochrome P450 monooxygenase ORF6 (579 aa).

Asparagine 2 carries an N-linked (GlcNAc...) asparagine glycan. A helical membrane pass occupies residues 7–29 (PLGSFVGTTLLLFILYKLVKLAY). N-linked (GlcNAc...) asparagine glycosylation is found at asparagine 194 and asparagine 390. Residue cysteine 512 participates in heme binding.

Belongs to the cytochrome P450 family. The cofactor is heme.

It is found in the membrane. It functions in the pathway sesquiterpene biosynthesis. Cytochrome P450 monooxygenase; part of the gene cluster that mediates the biosynthesis of PR-toxin, a bicyclic sesquiterpene belonging to the eremophilane class and acting as a mycotoxin. The first step of the pathway is catalyzed by the aristolochene synthase which performs the cyclization of trans,trans-farnesyl diphosphate (FPP) to the bicyclic sesquiterpene aristolochene. Following the formation of aristolochene, the non-oxygenated aristolochene is converted to the trioxygenated intermediate eremofortin B, via 7-epi-neopetasone. This conversion appears to involve three enzymes, a hydroxysterol oxidase-like enzyme, the quinone-oxidase prx3 that forms the quinone-type-structure in the bicyclic nucleus of aristolochene with the C8-oxo group and the C-3 hydroxyl group, and the P450 monooxygenase ORF6 that introduces the epoxide at the double bond between carbons 1 and 2. No monoxy or dioxy-intermediates have been reported to be released to the broth, so these three early oxidative reactions may be coupled together. Eremofortin B is further oxidized by another P450 monooxygenase, that introduces a second epoxide between carbons 7 and 11 prior to acetylation to eremofortin A by the acetyltransferase ORF8. The second epoxidation may be performed by a second P450 monooxygenase. After the acetylation step, eremofortin A is converted to eremofortin C and then to PR-toxin. First the conversion of eremofortin A to eremofortin C proceeds by oxidation of the side chain of the molecule at C-12 and is catalyzed by the short-chain oxidoreductase prx1. The cytochrome P450 monooxygenase ORF6 is probably also involved in this step. The primary alcohol formed at C-12 is finally oxidized by the short-chain alcohol dehydrogenase prx4 that forms PR-toxin. This chain is Cytochrome P450 monooxygenase ORF6, found in Penicillium roqueforti (strain FM164).